The primary structure comprises 558 residues: NAD(P)H-quinone oxidoreductase chain 4 (558 aa).

The next 15 membrane-spanning stretches (helical) occupy residues 25-45 (FPWLSLSILFPIVGAFIVPFV), 56-76 (WFALGIALTTFLITAAAYLTG), 90-110 (VSWLPNLGLTWAVGADGLSMP), 111-131 (LILLTSFITALAVLAAWPVTF), 133-153 (PKLFFFLILAMDGGQIAVFAV), 157-177 (LLFFLAWELELLPVYLLLAIW), 189-209 (FILYTAGSSLFILLAALAMGF), 230-250 (GFELLCYAGLLIAFGVKLPIV), 264-284 (TAPVHMLLAGILLKMGGYALM), 298-318 (FAPLLVVLGVVNIIYAALTSF), 327-347 (IAYSSISHMGFVLIGIGSFSE), 353-373 (AMLQMISHGLIGASLFFLVGA), 397-417 (FALWTVCCLASLALPGMSGFV), 438-458 (IVIDGLAAIGVILTPIYLLSM), and 485-505 (VYIIGCLLVPIIGIGLYPKLM).

It belongs to the complex I subunit 4 family.

Its subcellular location is the cellular thylakoid membrane. It carries out the reaction a plastoquinone + NADH + (n+1) H(+)(in) = a plastoquinol + NAD(+) + n H(+)(out). The catalysed reaction is a plastoquinone + NADPH + (n+1) H(+)(in) = a plastoquinol + NADP(+) + n H(+)(out). NDH-1 shuttles electrons from NAD(P)H, via FMN and iron-sulfur (Fe-S) centers, to quinones in the respiratory chain. The immediate electron acceptor for the enzyme in this species is believed to be plastoquinone. Couples the redox reaction to proton translocation (for every two electrons transferred, four hydrogen ions are translocated across the cytoplasmic membrane), and thus conserves the redox energy in a proton gradient. The sequence is that of NAD(P)H-quinone oxidoreductase chain 4 from Synechococcus sp. (strain CC9311).